The chain runs to 198 residues: Outer-membrane lipoprotein carrier protein (198 aa).

Positions 1–16 are cleaved as a signal peptide; the sequence is MKKWLVVFFLSASALA.

This sequence belongs to the LolA family. Monomer.

It is found in the periplasm. Its function is as follows. Participates in the translocation of lipoproteins from the inner membrane to the outer membrane. Only forms a complex with a lipoprotein if the residue after the N-terminal Cys is not an aspartate (The Asp acts as a targeting signal to indicate that the lipoprotein should stay in the inner membrane). This is Outer-membrane lipoprotein carrier protein from Vibrio vulnificus (strain YJ016).